Reading from the N-terminus, the 264-residue chain is V-type proton ATPase subunit D (264 aa).

Residues 214-230 are compositionally biased toward basic and acidic residues; sequence RDNAETDAQMKAKKAEQ. The disordered stretch occupies residues 214-264; it reads RDNAETDAQMKAKKAEQQRLALADSENAEGEQTENTPADILAAEEDEDVIF. A compositionally biased stretch (acidic residues) spans 255–264; sequence AAEEDEDVIF.

This sequence belongs to the V-ATPase D subunit family. As to quaternary structure, V-ATPase is a heteromultimeric enzyme composed of a peripheral catalytic V1 complex (components A to H) attached to an integral membrane V0 proton pore complex (components: a, c, c', c'', d, e, f and VOA1).

It is found in the vacuole membrane. Functionally, subunit of the V1 complex of vacuolar(H+)-ATPase (V-ATPase), a multisubunit enzyme composed of a peripheral complex (V1) that hydrolyzes ATP and a membrane integral complex (V0) that translocates protons. V-ATPase is responsible for acidifying and maintaining the pH of intracellular compartments. In Neurospora crassa (strain ATCC 24698 / 74-OR23-1A / CBS 708.71 / DSM 1257 / FGSC 987), this protein is V-type proton ATPase subunit D (vma-8).